A 684-amino-acid polypeptide reads, in one-letter code: DNA-directed RNA polymerase subunit beta' (684 aa).

Zn(2+) contacts are provided by cysteine 69, cysteine 71, cysteine 87, and cysteine 90. Positions 489, 491, and 493 each coordinate Mg(2+).

This sequence belongs to the RNA polymerase beta' chain family. RpoC1 subfamily. In terms of assembly, in plastids the minimal PEP RNA polymerase catalytic core is composed of four subunits: alpha, beta, beta', and beta''. When a (nuclear-encoded) sigma factor is associated with the core the holoenzyme is formed, which can initiate transcription. It depends on Mg(2+) as a cofactor. Zn(2+) serves as cofactor.

Its subcellular location is the plastid. The protein localises to the chloroplast. The catalysed reaction is RNA(n) + a ribonucleoside 5'-triphosphate = RNA(n+1) + diphosphate. Functionally, DNA-dependent RNA polymerase catalyzes the transcription of DNA into RNA using the four ribonucleoside triphosphates as substrates. The protein is DNA-directed RNA polymerase subunit beta' of Marchantia polymorpha (Common liverwort).